A 370-amino-acid polypeptide reads, in one-letter code: tRNA-specific 2-thiouridylase MnmA 1 (370 aa).

Residues 9 to 16 and Met35 each bind ATP; that span reads GMSGGVDS. The segment at 95 to 97 is interaction with target base in tRNA; sequence NPD. Cys100 (nucleophile) is an active-site residue. Cys100 and Cys196 are joined by a disulfide. Gly124 is an ATP binding site. The interval 146–148 is interaction with tRNA; it reads KDQ. The active-site Cysteine persulfide intermediate is Cys196. The tract at residues 306–307 is interaction with tRNA; that stretch reads RY.

This sequence belongs to the MnmA/TRMU family.

It is found in the cytoplasm. It carries out the reaction S-sulfanyl-L-cysteinyl-[protein] + uridine(34) in tRNA + AH2 + ATP = 2-thiouridine(34) in tRNA + L-cysteinyl-[protein] + A + AMP + diphosphate + H(+). In terms of biological role, catalyzes the 2-thiolation of uridine at the wobble position (U34) of tRNA, leading to the formation of s(2)U34. The chain is tRNA-specific 2-thiouridylase MnmA 1 from Geobacillus kaustophilus (strain HTA426).